The following is a 67-amino-acid chain: MARITVEDCLKVIPNRFNMTLAATVRARQISVGSTPMIDAGRDKPIVIALRELAQKKYNENILNTIR.

This sequence belongs to the RNA polymerase subunit omega family. The RNAP catalytic core consists of 2 alpha, 1 beta, 1 beta' and 1 omega subunit. When a sigma factor is associated with the core the holoenzyme is formed, which can initiate transcription.

It carries out the reaction RNA(n) + a ribonucleoside 5'-triphosphate = RNA(n+1) + diphosphate. Promotes RNA polymerase assembly. Latches the N- and C-terminal regions of the beta' subunit thereby facilitating its interaction with the beta and alpha subunits. This is DNA-directed RNA polymerase subunit omega from Nitrosomonas eutropha (strain DSM 101675 / C91 / Nm57).